We begin with the raw amino-acid sequence, 225 residues long: Sirohydrochlorin ferrochelatase, chloroplastic (225 aa).

A chloroplast-targeting transit peptide spans 1–46 (MTTQSQFLVNLSYGGLASQSNLRANNRVSPSSCQITRTNRSWALPV). Fe cation contacts are provided by His-89 and His-155. Positions 199, 210, 213, and 219 each coordinate [4Fe-4S] cluster.

It belongs to the CbiX family. SirB subfamily. Homodimer. Requires [4Fe-4S] cluster as cofactor.

It localises to the plastid. It is found in the chloroplast. The enzyme catalyses siroheme + 2 H(+) = sirohydrochlorin + Fe(2+). It participates in porphyrin-containing compound metabolism; siroheme biosynthesis; siroheme from sirohydrochlorin: step 1/1. Its function is as follows. Chelates iron to the siroheme precursor. Catalyzes the last step of the siroheme biosynthesis. Unlike its counterparts in bacteria, contains an [Fe-S] cluster which is not involved directly in the enzymatic reaction, but may play regulatory role in iron, sulfur and tetrapyrrole metabolism. The [Fe-S] cluster is required for normal plant growth. The chain is Sirohydrochlorin ferrochelatase, chloroplastic from Arabidopsis thaliana (Mouse-ear cress).